The following is a 174-amino-acid chain: Neuromedin-U (174 aa).

An N-terminal signal peptide occupies residues 1 to 34 (MLRTESCRPRSPAGQVAAASPLLLLLLLLAWCAG). The propeptide occupies 35–103 (ACRGAPILPQ…EQDEKDNTKR (69 aa)). Methionine 139 carries the post-translational modification Methionine sulfoxide; partial. At asparagine 166 the chain carries Asparagine amide. A propeptide spanning residues 170-174 (SAGFI) is cleaved from the precursor.

Belongs to the NmU family. Expressed throughout the enteric nervous system with highest levels being found in the jejunum.

It is found in the secreted. Functionally, ligand for receptors NMUR1 and NMUR2. Stimulates muscle contractions of specific regions of the gastrointestinal tract. In humans, NmU stimulates contractions of the ileum and urinary bladder. In terms of biological role, does not function as a ligand for either NMUR1 or NMUR2. Indirectly induces prolactin release although its potency is much lower than that of neuromedin precursor-related peptide 36. Its function is as follows. Does not function as a ligand for either NMUR1 or NMUR2. Indirectly induces prolactin release from lactotroph cells in the pituitary gland, probably via the hypothalamic dopaminergic system. The polypeptide is Neuromedin-U (NMU) (Homo sapiens (Human)).